A 385-amino-acid chain; its full sequence is S-type anion channel SLAH1 (385 aa).

Residues 1 to 42 (MEIPRQEIHIEIDNSIPSSKEFKTGLADAKPVVLMSALRSLH) lie on the Cytoplasmic side of the membrane. Residues 43-65 (AGYFRISLSLCSQALLWKIMIAP) form a helical membrane-spanning segment. Residues 66–81 (ESPSMSHMHSKLPSMA) lie on the Extracellular side of the membrane. The helical transmembrane segment at 82-102 (FHLLWYLALVTQVSLCFLYAL) threads the bilayer. The Cytoplasmic segment spans residues 103 to 114 (KCIFFFDKVKEE). A helical transmembrane segment spans residues 115–135 (FLHYIGVNYLYAPSISWLLML). At 136-150 (QSAPMMEPNSVLYQT) the chain is on the extracellular side. A helical transmembrane segment spans residues 151–171 (LFWIFAVPVLTLDIKLYGQWF). At 172-176 (TTEKR) the chain is on the cytoplasmic side. Residues 177 to 197 (FLSMLANPASQVSVIANLVAA) form a helical membrane-spanning segment. Topologically, residues 198–207 (RGAAEMGWNE) are extracellular. Residues 208–228 (CALCMFSLGMVHYLVIFVTLY) form a helical membrane-spanning segment. The Cytoplasmic segment spans residues 229-243 (QRLPGGNNFPAKLRP). Residues 244–264 (IFFLFVAAPAMASLAWNSICG) form a helical membrane-spanning segment. Residue Thr-265 is a topological domain, extracellular. Residues 266 to 286 (FDAVAKMLFFLSLFIFMSLVC) form a helical membrane-spanning segment. Residues 287 to 299 (RPNLFKKSMKRFN) are Cytoplasmic-facing. The helical transmembrane segment at 300–320 (VAWWAYSFPLTFLALDSVQYA) threads the bilayer. Topologically, residues 321-330 (QEVKDPVGSG) are extracellular. The chain crosses the membrane as a helical span at residues 331-351 (LMLIFSSISVLIFLGMMVLTA). The Cytoplasmic segment spans residues 352-385 (ANSNRLLRHDPVLGSATDPKDKQKTLSLNATNQN). The segment at 366-385 (SATDPKDKQKTLSLNATNQN) is disordered. Over residues 376–385 (TLSLNATNQN) the composition is skewed to polar residues.

This sequence belongs to the SLAC1 S-type anion channel family. As to quaternary structure, homotrimer. Expressed in the vascular systems of root.

It localises to the cell membrane. Slow, weak voltage-dependent S-type anion efflux channel involved in maintenance of anion homeostasis. The sequence is that of S-type anion channel SLAH1 (SLAH1) from Arabidopsis thaliana (Mouse-ear cress).